The chain runs to 72 residues: Translation initiation factor IF-1 (72 aa).

One can recognise an S1-like domain in the interval 1–72 (MAKEESIEIE…TKGRITYRYK (72 aa)).

It belongs to the IF-1 family. In terms of assembly, component of the 30S ribosomal translation pre-initiation complex which assembles on the 30S ribosome in the order IF-2 and IF-3, IF-1 and N-formylmethionyl-tRNA(fMet); mRNA recruitment can occur at any time during PIC assembly.

It is found in the cytoplasm. One of the essential components for the initiation of protein synthesis. Stabilizes the binding of IF-2 and IF-3 on the 30S subunit to which N-formylmethionyl-tRNA(fMet) subsequently binds. Helps modulate mRNA selection, yielding the 30S pre-initiation complex (PIC). Upon addition of the 50S ribosomal subunit IF-1, IF-2 and IF-3 are released leaving the mature 70S translation initiation complex. The chain is Translation initiation factor IF-1 from Chlorobium chlorochromatii (strain CaD3).